The primary structure comprises 433 residues: Mannan endo-1,4-beta-mannosidase 2 (433 aa).

Positions Met-1 to Gly-28 are cleaved as a signal peptide. The N-linked (GlcNAc...) asparagine glycan is linked to Asn-46. A substrate-binding site is contributed by Trp-98. A glycan (N-linked (GlcNAc...) asparagine) is linked at Asn-169. Asn-214 is a binding site for substrate. Glu-215 functions as the Proton donor in the catalytic mechanism. A substrate-binding site is contributed by Tyr-295. Glu-335 serves as the catalytic Nucleophile. Trp-377 provides a ligand contact to substrate.

Belongs to the glycosyl hydrolase 5 (cellulase A) family. As to expression, expressed in roots, stems, leaves and seeds.

The protein localises to the secreted. It catalyses the reaction Random hydrolysis of (1-&gt;4)-beta-D-mannosidic linkages in mannans, galactomannans and glucomannans.. This chain is Mannan endo-1,4-beta-mannosidase 2 (MAN2), found in Arabidopsis thaliana (Mouse-ear cress).